The sequence spans 971 residues: Exportin-2 (971 aa).

The residue at position 1 (M1) is an N-acetylmethionine. Residues 29 to 102 (AEKFLESVEG…KANIVHLMLS (74 aa)) enclose the Importin N-terminal domain. Phosphoserine is present on S112. N6-acetyllysine is present on residues K574 and K824. Residue S931 is modified to Phosphoserine.

This sequence belongs to the XPO2/CSE1 family. In terms of assembly, found in a complex with CSE1L/XPO2, Ran and KPNA2. Binds with high affinity to importin-alpha only in the presence of RanGTP. The complex is dissociated by the combined action of RanBP1 and RanGAP1. Interacts with CFTR.

The protein localises to the cytoplasm. It localises to the nucleus. Export receptor for importin-alpha. Mediates importin-alpha re-export from the nucleus to the cytoplasm after import substrates (cargos) have been released into the nucleoplasm. In the nucleus binds cooperatively to importin-alpha and to the GTPase Ran in its active GTP-bound form. Docking of this trimeric complex to the nuclear pore complex (NPC) is mediated through binding to nucleoporins. Upon transit of a nuclear export complex into the cytoplasm, disassembling of the complex and hydrolysis of Ran-GTP to Ran-GDP (induced by RANBP1 and RANGAP1, respectively) cause release of the importin-alpha from the export receptor. CSE1L/XPO2 then return to the nuclear compartment and mediate another round of transport. The directionality of nuclear export is thought to be conferred by an asymmetric distribution of the GTP- and GDP-bound forms of Ran between the cytoplasm and nucleus. This Pongo abelii (Sumatran orangutan) protein is Exportin-2 (CSE1L).